We begin with the raw amino-acid sequence, 401 residues long: Patatin-like protein 4 (401 aa).

Residues 17–218 (LSLDGGGVRG…TANDPTLVGM (202 aa)) form the PNPLA domain. The GXGXXG signature appears at 21–26 (GGGVRG). A GXSXG motif is present at residues 60-64 (GTSTG). The Nucleophile role is filled by serine 62. Aspartate 205 serves as the catalytic Proton acceptor. Residues 205-207 (DGG) carry the DGA/G motif.

This sequence belongs to the patatin family.

Functionally, possesses non-specific lipolytic acyl hydrolase (LAH) activity. Hydrolyzes phospholipids as well as galactolipids. May play a role in disease resistance. In Arabidopsis thaliana (Mouse-ear cress), this protein is Patatin-like protein 4 (PLP4).